The sequence spans 305 residues: Glycine--tRNA ligase alpha subunit (305 aa).

Belongs to the class-II aminoacyl-tRNA synthetase family. In terms of assembly, tetramer of two alpha and two beta subunits.

Its subcellular location is the cytoplasm. It catalyses the reaction tRNA(Gly) + glycine + ATP = glycyl-tRNA(Gly) + AMP + diphosphate. In Streptococcus pneumoniae serotype 4 (strain ATCC BAA-334 / TIGR4), this protein is Glycine--tRNA ligase alpha subunit.